Reading from the N-terminus, the 298-residue chain is Ribosomal protein L11 methyltransferase (298 aa).

S-adenosyl-L-methionine-binding residues include Thr139, Gly163, Asp185, and Asn232.

It belongs to the methyltransferase superfamily. PrmA family.

It is found in the cytoplasm. It catalyses the reaction L-lysyl-[protein] + 3 S-adenosyl-L-methionine = N(6),N(6),N(6)-trimethyl-L-lysyl-[protein] + 3 S-adenosyl-L-homocysteine + 3 H(+). Methylates ribosomal protein L11. This is Ribosomal protein L11 methyltransferase from Gloeothece citriformis (strain PCC 7424) (Cyanothece sp. (strain PCC 7424)).